The primary structure comprises 545 residues: Sensory neuron membrane protein 1 (545 aa).

The Cytoplasmic portion of the chain corresponds to 1-10 (MELKERNFKK). A helical transmembrane segment spans residues 11–31 (IGLICVAVLLCGMVFSYGIFP). Over 32–464 (SILRFMIKQN…LFLGLKFNAT (433 aa)) the chain is Extracellular. Residues N69, N214, and N227 are each glycosylated (N-linked (GlcNAc...) asparagine). 3 cysteine pairs are disulfide-bonded: C266-C331, C295-C351, and C333-C340. N-linked (GlcNAc...) asparagine glycans are attached at residues N444 and N462. Residues 465–485 (VKWLTIIIGTVGAVGSAYMYF) form a helical membrane-spanning segment. Residues 486–545 (RKETKTTDVAPVDVSTPDTNPSSAKDGVVNVSLGRNLPPVIDGLDKPPKLRATELQQERY) are Cytoplasmic-facing.

The protein belongs to the CD36 family. In terms of tissue distribution, selectively expressed in antenna.

It is found in the cell membrane. Plays an olfactory role that is not restricted to pheromone sensitivity. This chain is Sensory neuron membrane protein 1 (snmp1), found in Anopheles gambiae (African malaria mosquito).